Here is a 453-residue protein sequence, read N- to C-terminus: Tubulin alpha-1 chain (453 aa).

7 residues coordinate GTP: Gln-11, Glu-71, Gly-144, Thr-145, Thr-179, Asn-206, and Asn-228. Residue Glu-71 participates in Mg(2+) binding. Glu-254 is a catalytic residue. Residues Glu-433–Tyr-453 form a disordered region.

Belongs to the tubulin family. As to quaternary structure, dimer of alpha and beta chains. A typical microtubule is a hollow water-filled tube with an outer diameter of 25 nm and an inner diameter of 15 nM. Alpha-beta heterodimers associate head-to-tail to form protofilaments running lengthwise along the microtubule wall with the beta-tubulin subunit facing the microtubule plus end conferring a structural polarity. Microtubules usually have 13 protofilaments but different protofilament numbers can be found in some organisms and specialized cells. Mg(2+) is required as a cofactor. In terms of processing, undergoes a tyrosination/detyrosination cycle, the cyclic removal and re-addition of a C-terminal tyrosine residue by the enzymes tubulin tyrosine carboxypeptidase (TTCP) and tubulin tyrosine ligase (TTL), respectively.

The protein resides in the cytoplasm. It is found in the cytoskeleton. It carries out the reaction GTP + H2O = GDP + phosphate + H(+). Tubulin is the major constituent of microtubules, a cylinder consisting of laterally associated linear protofilaments composed of alpha- and beta-tubulin heterodimers. Microtubules grow by the addition of GTP-tubulin dimers to the microtubule end, where a stabilizing cap forms. Below the cap, tubulin dimers are in GDP-bound state, owing to GTPase activity of alpha-tubulin. In Pelvetia fastigiata (Brown alga), this protein is Tubulin alpha-1 chain (TUBA1).